The chain runs to 658 residues: Biosynthetic arginine decarboxylase (658 aa).

Lys-127 carries the N6-(pyridoxal phosphate)lysine modification. 307-317 contacts substrate; that stretch reads FDVGGGLGVDY.

The protein belongs to the Orn/Lys/Arg decarboxylase class-II family. SpeA subfamily. In terms of assembly, homotetramer. Mg(2+) serves as cofactor. It depends on pyridoxal 5'-phosphate as a cofactor.

Its subcellular location is the periplasm. It carries out the reaction L-arginine + H(+) = agmatine + CO2. Its pathway is amine and polyamine biosynthesis; agmatine biosynthesis; agmatine from L-arginine: step 1/1. Its function is as follows. Catalyzes the biosynthesis of agmatine from arginine. In Escherichia coli O157:H7, this protein is Biosynthetic arginine decarboxylase (speA).